The chain runs to 647 residues: DNA topoisomerase 3 (647 aa).

The 134-residue stretch at 2–135 folds into the Toprim domain; that stretch reads TRLFIAEKPS…KKETVQRLLI (134 aa). Mg(2+) is bound by residues glutamate 8, aspartate 104, and aspartate 106. The region spanning 156–608 is the Topo IA-type catalytic domain; that stretch reads FIPLSVSALA…TLQGRLEQLI (453 aa). Residues 195-200 form an interaction with DNA region; it reads SVGRVQ. The O-(5'-phospho-DNA)-tyrosine intermediate role is filled by tyrosine 332.

Belongs to the type IA topoisomerase family. Mg(2+) serves as cofactor.

It carries out the reaction ATP-independent breakage of single-stranded DNA, followed by passage and rejoining.. Releases the supercoiling and torsional tension of DNA, which is introduced during the DNA replication and transcription, by transiently cleaving and rejoining one strand of the DNA duplex. Introduces a single-strand break via transesterification at a target site in duplex DNA. The scissile phosphodiester is attacked by the catalytic tyrosine of the enzyme, resulting in the formation of a DNA-(5'-phosphotyrosyl)-enzyme intermediate and the expulsion of a 3'-OH DNA strand. The free DNA strand then undergoes passage around the unbroken strand, thus removing DNA supercoils. Finally, in the religation step, the DNA 3'-OH attacks the covalent intermediate to expel the active-site tyrosine and restore the DNA phosphodiester backbone. The polypeptide is DNA topoisomerase 3 (Vibrio cholerae serotype O1 (strain ATCC 39315 / El Tor Inaba N16961)).